The sequence spans 491 residues: MASTTCTRFTDEYQLYEELGKGAFSVVRRCMKISTGQEYAAKIINTKKLSARDHQKLEREARICRLLKHANIVRLHDSISEEGVHYLVFDLVTGGELFEDIVAREYYSEADASHCIQQILEAVLHCHQMGVVHRDLKPENLLLASKLKGAAVKLADFGLAIEVQGDQQAWFGFAGTPGYLSPEVLRKEPYGKPVDMWACGVILYILLVGYPPFWDEDQHRLYQQIKAGAYDFPSPEWDTVTPEAKDLINKMLTINPAKRITAAEALKHPWICQRSTVASMMHRQETVECLKKFNARRKLKGAILTTMLATRNFSSKNPYKKPDGVKEPQTTVIHNPTDGNKESSESTNTTIEDEDIKARKQEIIKVTELLIEAINNGEFEAYTKICDPGLTSFEPEALGNLVEGTDFHRFYFENSLSKGHKPIHTILLNPHVHLIGEDAACIAYIRLTQYMDVNNMPRTMQSEETRVWHRRDGKWQNIHFHRSGSPTVPTK.

The 259-residue stretch at 13 to 271 folds into the Protein kinase domain; sequence YQLYEELGKG…AAEALKHPWI (259 aa). ATP contacts are provided by residues 19 to 27 and Lys-42; that span reads LGKGAFSVV. Asp-135 (proton acceptor) is an active-site residue. At Thr-286 the chain carries Phosphothreonine. Ser-314 carries the post-translational modification Phosphoserine. The segment at 315–354 is disordered; the sequence is SKNPYKKPDGVKEPQTTVIHNPTDGNKESSESTNTTIEDE. Residues 328-338 are compositionally biased toward polar residues; the sequence is PQTTVIHNPTD. Thr-350 carries the post-translational modification Phosphothreonine.

This sequence belongs to the protein kinase superfamily. CAMK Ser/Thr protein kinase family. CaMK subfamily. CAMK2 is composed of four different chains: alpha, beta, gamma, and delta. The different isoforms assemble into homo- or heteromultimeric holoenzymes composed of 8 to 12 subunits. In terms of tissue distribution, first detected at the 18-somite stage where expression is restricted to somite boundaries. At 24 hpf, expression is elevated in epidermal tissue and in the hatching gland. After 24 hpf, expression dimishes, but persists at low levels along the dorsal trunk. At 48 hpf, expression is restricted at a low level to the forebrain. At 72 hpf, weak expression reappears along the entire dorsal trunk in discrete cell bodies.

It catalyses the reaction L-seryl-[protein] + ATP = O-phospho-L-seryl-[protein] + ADP + H(+). It carries out the reaction L-threonyl-[protein] + ATP = O-phospho-L-threonyl-[protein] + ADP + H(+). Its activity is regulated as follows. Autophosphorylation of CAMK2 plays an important role in the regulation of the kinase activity. Functionally, caM-kinase II (CAMK2) is a prominent kinase in the central nervous system. This is Calcium/calmodulin-dependent protein kinase type II delta 1 chain from Danio rerio (Zebrafish).